A 153-amino-acid polypeptide reads, in one-letter code: 6,7-dimethyl-8-ribityllumazine synthase (153 aa).

Residues phenylalanine 22, 56-58 (AFE), and 80-82 (TVI) contribute to the 5-amino-6-(D-ribitylamino)uracil site. Residue 85–86 (ST) coordinates (2S)-2-hydroxy-3-oxobutyl phosphate. The active-site Proton donor is histidine 88. Phenylalanine 113 is a 5-amino-6-(D-ribitylamino)uracil binding site. Arginine 127 contributes to the (2S)-2-hydroxy-3-oxobutyl phosphate binding site.

Belongs to the DMRL synthase family. As to quaternary structure, forms an icosahedral capsid composed of 60 subunits, arranged as a dodecamer of pentamers.

The catalysed reaction is (2S)-2-hydroxy-3-oxobutyl phosphate + 5-amino-6-(D-ribitylamino)uracil = 6,7-dimethyl-8-(1-D-ribityl)lumazine + phosphate + 2 H2O + H(+). It functions in the pathway cofactor biosynthesis; riboflavin biosynthesis; riboflavin from 2-hydroxy-3-oxobutyl phosphate and 5-amino-6-(D-ribitylamino)uracil: step 1/2. Its function is as follows. Catalyzes the formation of 6,7-dimethyl-8-ribityllumazine by condensation of 5-amino-6-(D-ribitylamino)uracil with 3,4-dihydroxy-2-butanone 4-phosphate. This is the penultimate step in the biosynthesis of riboflavin. This is 6,7-dimethyl-8-ribityllumazine synthase from Actinobacillus pleuropneumoniae (Haemophilus pleuropneumoniae).